A 140-amino-acid chain; its full sequence is MIKLRLKRFGKKREASFRLVACNSTSRRDGRPLQELGFYNPRTKETRLDTEAIRERLGQGAQPTDVVRTLLERGGLIEKTIRPAETVGKAKQAAKREEEAKQAAKEAAEAKAAAEAEAAAAAEAAKAEDAPDGETESSEG.

The interval 86–140 (TVGKAKQAAKREEEAKQAAKEAAEAKAAAEAEAAAAAEAAKAEDAPDGETESSEG) is disordered. Over residues 94 to 114 (AKREEEAKQAAKEAAEAKAAA) the composition is skewed to basic and acidic residues. Over residues 115–124 (EAEAAAAAEA) the composition is skewed to low complexity. Acidic residues predominate over residues 130-140 (APDGETESSEG).

This sequence belongs to the bacterial ribosomal protein bS16 family.

In Parasynechococcus marenigrum (strain WH8102), this protein is Small ribosomal subunit protein bS16.